Consider the following 661-residue polypeptide: Solute carrier organic anion transporter family member 1A4 (661 aa).

Residues Met1–Lys20 lie on the Cytoplasmic side of the membrane. The helical transmembrane segment at Met21–Met40 threads the bilayer. Residues Asn41–Gly59 lie on the Extracellular side of the membrane. The chain crosses the membrane as a helical span at residues Leu60–Gly80. The Cytoplasmic portion of the chain corresponds to Thr81–Pro86. A helical transmembrane segment spans residues Ile87–Gly111. The Extracellular segment spans residues Gln112–Ser154. Residues Asn123 and Asn134 are each glycosylated (N-linked (GlcNAc...) asparagine). A helical transmembrane segment spans residues Leu155 to Glu183. At Asp184–Met202 the chain is on the cytoplasmic side. A helical membrane pass occupies residues Thr203–Ile223. Topologically, residues Glu224 to Val241 are extracellular. The helical transmembrane segment at Gly242–Pro266 threads the bilayer. Over Lys267–Ser310 the chain is Cytoplasmic. The chain crosses the membrane as a helical span at residues Leu311–Ile332. The Extracellular segment spans residues Asn333 to Glu352. The helical transmembrane segment at Val353 to Met376 threads the bilayer. Over Lys377–Lys380 the chain is Cytoplasmic. Residues Val381–Ser404 form a helical membrane-spanning segment. Residues Tyr405–Phe512 lie on the Extracellular side of the membrane. The 56-residue stretch at Asn432–Gln487 folds into the Kazal-like domain. 3 cysteine pairs are disulfide-bonded: Cys438–Cys468, Cys444–Cys464, and Cys453–Cys485. A glycan (N-linked (GlcNAc...) asparagine) is linked at Asn443. Asn482 and Asn491 each carry an N-linked (GlcNAc...) asparagine glycan. The chain crosses the membrane as a helical span at residues Leu513 to Leu535. The Cytoplasmic segment spans residues Arg536–Ser544. Residues Leu545–Ile570 form a helical membrane-spanning segment. The Extracellular segment spans residues Asp571–Pro604. The chain crosses the membrane as a helical span at residues Ala605–Thr622. Residues Arg623–Asp661 are Cytoplasmic-facing. Residues Ser633 and Ser634 each carry the phosphoserine modification.

It belongs to the organo anion transporter (TC 2.A.60) family. As to expression, highly expressed in brain, liver, and kidney but not expressed in heart, spleen, lung, skeletal muscle, and testis.

The protein resides in the cell membrane. The catalysed reaction is estrone 3-sulfate(out) = estrone 3-sulfate(in). It carries out the reaction taurocholate(out) = taurocholate(in). It catalyses the reaction prostaglandin E2(out) = prostaglandin E2(in). The enzyme catalyses L-thyroxine(out) = L-thyroxine(in). In terms of biological role, mediates the Na(+)-independent transport of organic anions such as taurocholate, cholate, 17-beta-glucuronosyl estradiol, prostaglandin E2, estrone 3-sulfate, L-thyroxine (T4), the cardiac glycosides ouabain and digoxin and thyroid hormones. May play an especially important role in the brain accumulation and toxicity of digoxin and in the hepatobiliary and renal excretion of cardiac glycosides. Shows a pH-sensitive substrate specificity which may be ascribed to the protonation state of the binding site and leads to a stimulation of substrate transport in an acidic microenvironment. Hydrogencarbonate/HCO3(-) acts as the probable counteranion that exchanges for organic anions. In Rattus norvegicus (Rat), this protein is Solute carrier organic anion transporter family member 1A4 (Slco1a4).